Here is a 510-residue protein sequence, read N- to C-terminus: Histidine ammonia-lyase (510 aa).

Positions 143–145 form a cross-link, 5-imidazolinone (Ala-Gly); sequence ASG. Residue serine 144 is modified to 2,3-didehydroalanine (Ser).

It belongs to the PAL/histidase family. Contains an active site 4-methylidene-imidazol-5-one (MIO), which is formed autocatalytically by cyclization and dehydration of residues Ala-Ser-Gly.

The protein localises to the cytoplasm. It catalyses the reaction L-histidine = trans-urocanate + NH4(+). The protein operates within amino-acid degradation; L-histidine degradation into L-glutamate; N-formimidoyl-L-glutamate from L-histidine: step 1/3. This is Histidine ammonia-lyase from Yersinia pseudotuberculosis serotype I (strain IP32953).